Here is a 380-residue protein sequence, read N- to C-terminus: MAIEMLGLILAGGQGTRLGKLTKDVAKPAVPFGGRYRIIDFALSNCANSNVKNVGVITQYQPLTLNAHIGNGAPWGLNGINSGVTILQPYSSQEGSKWFEGTSHAVYQNISYIDQQNPEYVLILSGDHIYKMDYEAMLESHKEREASLTVSVMEVPLEEASRFGIMNTDDNDRIIEFEEKPKEPKSNLASMGIYIFNWKRLREVLVNGYSKGNPMEDFGGDVIPAYIEAGENVFAYRFKGYWKDVGTIDSLHQSSMEFLDLNNELNITDKSWRIYSHNDISAPQFITEKSNVKNALVGDGCYVDGTVLHSILSQNVHVQEGTVIEDSFIMSGTFIGENVTIKNAIIGENAKIGDNVEIIGENEVAVIGHGEIKGENKNEQ.

Alpha-D-glucose 1-phosphate-binding positions include G164, 179–180 (EK), and S190.

It belongs to the bacterial/plant glucose-1-phosphate adenylyltransferase family. In terms of assembly, homotetramer.

The catalysed reaction is alpha-D-glucose 1-phosphate + ATP + H(+) = ADP-alpha-D-glucose + diphosphate. It functions in the pathway glycan biosynthesis; glycogen biosynthesis. Involved in the biosynthesis of ADP-glucose, a building block required for the elongation reactions to produce glycogen. Catalyzes the reaction between ATP and alpha-D-glucose 1-phosphate (G1P) to produce pyrophosphate and ADP-Glc. The chain is Glucose-1-phosphate adenylyltransferase from Lactococcus lactis subsp. lactis (strain IL1403) (Streptococcus lactis).